The following is a 437-amino-acid chain: MSKPVIAIVGRPNVGKSTIFNRIVGERVAIVEDRPGVTRDRIYSHGEWLNREFNVIDTGGIEIGDEPLLVQMRAQAELAIKEADVIIFIVNGREGVTAADQEVAKLLFRSKKPVVLGVNKIDHPDMQEELYEFYSLGIGDPIPISGAHGLGLGDLLDACVEHFPEDEGDDYDEDTIRISLIGRPNVGKSSLVNAMLGEERVIVSNIPGTTRDAIDTAFSRDDQEYVLIDTAGMRKRGKVYESTEKYSVLRSLKAIERSDVVLVVLNGEEGIIEQDKKIAGYAHEAGRAIIIVVNKWDAVEKDDKTLHRFQQKIRDEFQFLDYAPVLFVSAKTKQRLQHVLPAVKKVSENHNLRVPTHVLNDLVMDAVAMNPTPTDHGKRLKINYVTQVAVGPPTFVFFVNDPELMHFSYARFLENRLRDTFEFEGTPIKIIARKKND.

2 EngA-type G domains span residues 4 to 167 (PVIA…PEDE) and 176 to 351 (IRIS…ENHN). GTP contacts are provided by residues 10-17 (GRPNVGKS), 57-61 (DTGGI), 119-122 (NKID), 182-189 (GRPNVGKS), 229-233 (DTAGM), and 294-297 (NKWD). Residues 352 to 436 (LRVPTHVLND…PIKIIARKKN (85 aa)) form the KH-like domain.

Belongs to the TRAFAC class TrmE-Era-EngA-EngB-Septin-like GTPase superfamily. EngA (Der) GTPase family. In terms of assembly, associates with the 50S ribosomal subunit.

Its function is as follows. GTPase that plays an essential role in the late steps of ribosome biogenesis. The sequence is that of GTPase Der from Halalkalibacterium halodurans (strain ATCC BAA-125 / DSM 18197 / FERM 7344 / JCM 9153 / C-125) (Bacillus halodurans).